Reading from the N-terminus, the 349-residue chain is UDP-3-O-acylglucosamine N-acyltransferase (349 aa).

Residue His248 is the Proton acceptor of the active site.

The protein belongs to the transferase hexapeptide repeat family. LpxD subfamily. In terms of assembly, homotrimer.

The enzyme catalyses a UDP-3-O-[(3R)-3-hydroxyacyl]-alpha-D-glucosamine + a (3R)-hydroxyacyl-[ACP] = a UDP-2-N,3-O-bis[(3R)-3-hydroxyacyl]-alpha-D-glucosamine + holo-[ACP] + H(+). It functions in the pathway bacterial outer membrane biogenesis; LPS lipid A biosynthesis. Functionally, catalyzes the N-acylation of UDP-3-O-acylglucosamine using 3-hydroxyacyl-ACP as the acyl donor. Is involved in the biosynthesis of lipid A, a phosphorylated glycolipid that anchors the lipopolysaccharide to the outer membrane of the cell. This chain is UDP-3-O-acylglucosamine N-acyltransferase, found in Gloeothece citriformis (strain PCC 7424) (Cyanothece sp. (strain PCC 7424)).